A 185-amino-acid polypeptide reads, in one-letter code: Ribosome-recycling factor (185 aa).

The protein belongs to the RRF family.

It is found in the cytoplasm. Responsible for the release of ribosomes from messenger RNA at the termination of protein biosynthesis. May increase the efficiency of translation by recycling ribosomes from one round of translation to another. In Buchnera aphidicola subsp. Acyrthosiphon pisum (strain APS) (Acyrthosiphon pisum symbiotic bacterium), this protein is Ribosome-recycling factor.